We begin with the raw amino-acid sequence, 243 residues long: Tyrosine recombinase XerD-like (243 aa).

The Core-binding (CB) domain occupies 1 to 72 (MKEYIRPFLN…AVNQFLYFLY (72 aa)). One can recognise a Tyr recombinase domain in the interval 85 to 243 (LPKVSVSKEQ…KTMITLEKYR (159 aa)). Active-site residues include Lys-149 and Arg-210. The active-site O-(3'-phospho-DNA)-tyrosine intermediate is Tyr-242.

Belongs to the 'phage' integrase family. XerD-like subfamily.

It is found in the cytoplasm. In terms of biological role, putative tyrosine recombinase. Not involved in the cutting and rejoining of the recombining DNA molecules on dif(SL) site. In Streptococcus sanguinis (strain SK36), this protein is Tyrosine recombinase XerD-like.